Consider the following 183-residue polypeptide: ARS-binding factor 2, mitochondrial (183 aa).

Residues 1–26 (MNSYSLLTRSFHESSKPLFNLASTLL) constitute a mitochondrion transit peptide. 2 consecutive DNA-binding regions (HMG box) follow at residues 43–111 (PKRP…KEFD) and 116–183 (PKKP…YPLN).

It is found in the mitochondrion. It localises to the nucleus. In terms of biological role, specific binding to the autonomously replicating sequence 1 (ARS1). Interaction with regulatory regions: probably involved in compacting the mitochondrial genome. It might play a positive role in gene expression and replication. This chain is ARS-binding factor 2, mitochondrial (ABF2), found in Saccharomyces cerevisiae (strain ATCC 204508 / S288c) (Baker's yeast).